The sequence spans 343 residues: Ribosomal RNA small subunit methyltransferase C (343 aa).

It belongs to the methyltransferase superfamily. RsmC family. As to quaternary structure, monomer.

Its subcellular location is the cytoplasm. It catalyses the reaction guanosine(1207) in 16S rRNA + S-adenosyl-L-methionine = N(2)-methylguanosine(1207) in 16S rRNA + S-adenosyl-L-homocysteine + H(+). Specifically methylates the guanine in position 1207 of 16S rRNA in the 30S particle. The polypeptide is Ribosomal RNA small subunit methyltransferase C (Shigella flexneri serotype 5b (strain 8401)).